Here is a 1373-residue protein sequence, read N- to C-terminus: Disease resistance protein RRS1 (1373 aa).

The 142-residue stretch at 5–146 (EKDEEFVCIS…EIVRDVYETH (142 aa)) folds into the TIR domain. The region spanning 170–421 (IGIRCVGIWG…LLEGCGFFPH (252 aa)) is the NB-ARC domain. 179–186 (GMPGIGKT) is an ATP binding site. 9 LRR repeats span residues 498–522 (SEEIEGLFLDTSNLRFDLQPSAFKN), 535–553 (NPEVHPVINFPTGSLHSLP), 554–575 (NELRLLHWENYPLKSLPQNFDP), 577–598 (HLVEINMPYSQLQKLWGGTKNL), 621–646 (AENLEVIDLQGCTRLQNFPAAGRLLR), 665–688 (PPNIEKLHLQGTGILALPVSTVKP), 742–766 (LPNMANLDLNVLDLSGCSSLNSIQG), 768–793 (PRFLKQLYLGGTAIREVPQLPQSLEI), and 831–854 (PRNLKELYFAGTTLREVPQLPLSL). A Nuclear localization signal motif is present at residues 988–1005 (RNFHCWAPGKVVPKVRKD). Positions 1204–1272 (IPAIDEGDLW…YLSEHNHPRP (69 aa)) form a DNA-binding region, WRKY. Residues 1300–1323 (RVFQNKDEPNKPHLPSSSTPPGNA) form a disordered region.

In terms of assembly, interacts with PopP2, a R.solanacearum type III effector.

Its subcellular location is the nucleus. Transcription factor. Interacts specifically with the W box (5'-(T)TGAC[CT]-3'), a frequently occurring elicitor-responsive cis-acting element. Also acts as a disease resistance protein involved in resistance to fungal and bacterial pathogens, including R.solanacearum, P.syringae pv. tomato and C.higginsianum. This Arabidopsis thaliana (Mouse-ear cress) protein is Disease resistance protein RRS1.